Here is a 1233-residue protein sequence, read N- to C-terminus: uncharacterized protein (1233 aa).

Disordered regions lie at residues serine 32–proline 51, alanine 510–aspartate 529, and glutamate 882–serine 915. Composition is skewed to acidic residues over residues asparagine 513–aspartate 529 and glutamate 882–glycine 905. Over residues aspartate 906–serine 915 the composition is skewed to basic and acidic residues.

This is an uncharacterized protein from Dictyostelium discoideum (Social amoeba).